A 499-amino-acid chain; its full sequence is Protein dml1 (499 aa).

This sequence belongs to the misato family.

The protein localises to the mitochondrion. Its function is as follows. Involved in the partitioning of the mitochondrial organelle and mitochondrial DNA (mtDNA) inheritance. The chain is Protein dml1 (dml1) from Aspergillus clavatus (strain ATCC 1007 / CBS 513.65 / DSM 816 / NCTC 3887 / NRRL 1 / QM 1276 / 107).